The sequence spans 440 residues: R3H and coiled-coil domain-containing protein 1 (440 aa).

An R3H domain is found at N16–D81. Residues T154–G225 are disordered. Basic and acidic residues predominate over residues L157–E168. S236 carries the phosphoserine modification. Residues L242–H300 are a coiled coil. Positions L254–D276 are disordered. A compositionally biased stretch (acidic residues) spans E257–D276.

The sequence is that of R3H and coiled-coil domain-containing protein 1 from Homo sapiens (Human).